The sequence spans 403 residues: Argininosuccinate synthase (403 aa).

10 to 18 (AYSGGLDTS) provides a ligand contact to ATP. Tyr-87 serves as a coordination point for L-citrulline. Gly-117 contacts ATP. L-aspartate-binding residues include Thr-119, Asn-123, and Asp-124. An L-citrulline-binding site is contributed by Asn-123. Positions 127, 175, 260, and 272 each coordinate L-citrulline.

Belongs to the argininosuccinate synthase family. Type 1 subfamily. In terms of assembly, homotetramer.

It is found in the cytoplasm. It catalyses the reaction L-citrulline + L-aspartate + ATP = 2-(N(omega)-L-arginino)succinate + AMP + diphosphate + H(+). The protein operates within amino-acid biosynthesis; L-arginine biosynthesis; L-arginine from L-ornithine and carbamoyl phosphate: step 2/3. This is Argininosuccinate synthase from Bacillus subtilis (strain 168).